A 130-amino-acid chain; its full sequence is Ribosome-binding factor A (130 aa).

Belongs to the RbfA family. As to quaternary structure, monomer. Binds 30S ribosomal subunits, but not 50S ribosomal subunits or 70S ribosomes.

The protein resides in the cytoplasm. Functionally, one of several proteins that assist in the late maturation steps of the functional core of the 30S ribosomal subunit. Associates with free 30S ribosomal subunits (but not with 30S subunits that are part of 70S ribosomes or polysomes). Required for efficient processing of 16S rRNA. May interact with the 5'-terminal helix region of 16S rRNA. The sequence is that of Ribosome-binding factor A from Roseiflexus castenholzii (strain DSM 13941 / HLO8).